The chain runs to 440 residues: tRNA-2-methylthio-N(6)-dimethylallyladenosine synthase (440 aa).

Residues 5-121 enclose the MTTase N-terminal domain; it reads KKLYIKTYGC…LPEMEAKAGT (117 aa). Residues C14, C50, C84, C159, C163, and C166 each coordinate [4Fe-4S] cluster. The Radical SAM core domain maps to 145–378; it reads AKRGPTAFLT…LTRQQREVQD (234 aa). Residues 378-440 form the TRAM domain; that stretch reads DSMVGRELGV…ANSLAGELID (63 aa).

It belongs to the methylthiotransferase family. MiaB subfamily. In terms of assembly, monomer. The cofactor is [4Fe-4S] cluster.

It localises to the cytoplasm. It carries out the reaction N(6)-dimethylallyladenosine(37) in tRNA + (sulfur carrier)-SH + AH2 + 2 S-adenosyl-L-methionine = 2-methylsulfanyl-N(6)-dimethylallyladenosine(37) in tRNA + (sulfur carrier)-H + 5'-deoxyadenosine + L-methionine + A + S-adenosyl-L-homocysteine + 2 H(+). Its function is as follows. Catalyzes the methylthiolation of N6-(dimethylallyl)adenosine (i(6)A), leading to the formation of 2-methylthio-N6-(dimethylallyl)adenosine (ms(2)i(6)A) at position 37 in tRNAs that read codons beginning with uridine. In Ruegeria sp. (strain TM1040) (Silicibacter sp.), this protein is tRNA-2-methylthio-N(6)-dimethylallyladenosine synthase.